A 434-amino-acid polypeptide reads, in one-letter code: Glutamate-1-semialdehyde 2,1-aminomutase 1 (434 aa).

Lys270 is subject to N6-(pyridoxal phosphate)lysine.

This sequence belongs to the class-III pyridoxal-phosphate-dependent aminotransferase family. HemL subfamily. In terms of assembly, homodimer. Requires pyridoxal 5'-phosphate as cofactor.

The protein resides in the cytoplasm. It carries out the reaction (S)-4-amino-5-oxopentanoate = 5-aminolevulinate. The protein operates within porphyrin-containing compound metabolism; protoporphyrin-IX biosynthesis; 5-aminolevulinate from L-glutamyl-tRNA(Glu): step 2/2. This is Glutamate-1-semialdehyde 2,1-aminomutase 1 from Bacillus thuringiensis subsp. konkukian (strain 97-27).